The chain runs to 1040 residues: MTTKLSSFCFLTHGLAGISCEREHGSSRRFFYLPSRRLVSTSCKMRQQRGFDSSKRQEVKKGSPKPILSINSGLQSNNDEESDLENGSADSVPSLKSDAEKGSSIHGSIDMNHADENLEKKDDIQTTEVTRRKSKTAKKKGESIHATIDIGHDDGKNLDNITVPEVAKALSLNKSEGEQISDGQFGELMTMIRSAEKNILRLDEARATALDDLNKILSDKEALQGEINVLEMKLSETDERIKTAAQEKAHVELLEEQLEKLRHEMISPIESDGYVLALSKELETLKLENLSLRNDIEMLKSELDSVKDTGERVVVLEKECSGLESSVKDLESKLSVSQEDVSQLSTLKIECTDLWAKVETLQLLLDRATKQAEQAVIVLQQNQDLRNKVDKIEESLKEANVYKESSEKIQQYNELMQHKVTLLEERLEKSDAEIFSYVQLYQESIKEFQETLESLKEESKKKSRDEPVDDMPWDYWSRLLLTVDGWLLEKKIASNDADLLRDMVWKKDRRIHDTYIDVKDKNERDAISAFLKLVSSPTSSGLYVVHIAAEMAPVAKVGGLGDVVAGLGKALQRKGHLVEIILPKYDCMQYDRVRDLRALDTVVESYFDGKLYKNKIWIGTVEGLPVHFIEPQHPSKFFWRGQFYGEQDDFRRFSYFSRAALELLLQSGKKPDIIHCHDWQTAFVAPLYWDLYAPKGLDSARICFTCHNFEYQGTASASELGSCGLDVNQLNRPDRMQDHSSGDRVNPVKGAIIFSNIVTTVSPTYAQEVRTAEGGKGLHSTLNFHSKKFIGILNGIDTDSWNPATDPFLKAQFNAKDLQGKEENKHALRKQLGLSSAESRRPLVGCITRLVPQKGVHLIRHAIYRTLELGGQFVLLGSSPVPHIQREFEGIEQQFKSHDHVRLLLKYDEALSHTIYAASDLFIIPSIFEPCGLTQMIAMRYGSIPIARKTGGLNDSVFDIDDDTIPTQFQNGFTFQTADEQGFNYALERAFNHYKKDEEKWMRLVEKVMSIDFSWGSSATQYEELYTRSVSRARAVPNRT.

A chloroplast-targeting transit peptide spans 1-42 (MTTKLSSFCFLTHGLAGISCEREHGSSRRFFYLPSRRLVSTS). A disordered region spans residues 43–142 (CKMRQQRGFD…KSKTAKKKGE (100 aa)). 2 stretches are compositionally biased toward basic and acidic residues: residues 52–61 (DSSKRQEVKK) and 112–124 (NHAD…KDDI). Residues 187–466 (ELMTMIRSAE…EESKKKSRDE (280 aa)) are a coiled coil. ADP contacts are provided by K556, G559, and D562. Positions 679 and 680 each coordinate (1,4-alpha-D-glucosyl)n. ADP is bound by residues R849, K854, K906, D908, Y916, L933, and T934.

It belongs to the glycosyltransferase 1 family. Bacterial/plant glycogen synthase subfamily. In terms of assembly, interacts with PTST2. Interacts with PII1; the interaction is essential for the initiation of starch granules biosynthesis in leaf chloroplasts. Expressed in leaves and flowers.

It localises to the plastid. Its subcellular location is the chloroplast. The protein resides in the amyloplast. It is found in the chloroplast stroma. The catalysed reaction is [(1-&gt;4)-alpha-D-glucosyl](n) + ADP-alpha-D-glucose = [(1-&gt;4)-alpha-D-glucosyl](n+1) + ADP + H(+). The protein operates within glycan biosynthesis; starch biosynthesis. Probably involved in the priming of starch granule formation. May play a regulatory role in the control of starch accumulation in plastids. Is necessary and sufficient to establish the correct number of starch granules observed in chloroplasts. The polypeptide is Probable starch synthase 4, chloroplastic/amyloplastic (Arabidopsis thaliana (Mouse-ear cress)).